A 343-amino-acid polypeptide reads, in one-letter code: Ribosomal RNA small subunit methyltransferase C (343 aa).

It belongs to the methyltransferase superfamily. RsmC family. In terms of assembly, monomer.

It localises to the cytoplasm. It catalyses the reaction guanosine(1207) in 16S rRNA + S-adenosyl-L-methionine = N(2)-methylguanosine(1207) in 16S rRNA + S-adenosyl-L-homocysteine + H(+). Its function is as follows. Specifically methylates the guanine in position 1207 of 16S rRNA in the 30S particle. This is Ribosomal RNA small subunit methyltransferase C from Escherichia coli O157:H7.